Reading from the N-terminus, the 150-residue chain is MKCPYCSAPDSRVVNSRPSDDGASIRRRRECLRCNRRFTTYERAQLEPLMVLKRGGQREAFNPDKLLRGLILATEKRPVDPEQLRAFAYGFEDEVQASEITSEEIGRRAMTFLRPLDDVAYIRFASVYRDFDSLERFIEEIQGLKGRGED.

The tract at residues 1 to 22 is disordered; sequence MKCPYCSAPDSRVVNSRPSDDG. A zinc finger spans residues 3–34; it reads CPYCSAPDSRVVNSRPSDDGASIRRRRECLRC. The ATP-cone domain maps to 49–136; that stretch reads LMVLKRGGQR…VYRDFDSLER (88 aa).

The protein belongs to the NrdR family. It depends on Zn(2+) as a cofactor.

In terms of biological role, negatively regulates transcription of bacterial ribonucleotide reductase nrd genes and operons by binding to NrdR-boxes. This is Transcriptional repressor NrdR from Deinococcus geothermalis (strain DSM 11300 / CIP 105573 / AG-3a).